The primary structure comprises 346 residues: B3 domain-containing protein At5g60142 (346 aa).

Residues 13–109 constitute a DNA-binding region (TF-B3); sequence PKFFKVYLPD…CFNFCIYGRA (97 aa). 2 disordered regions span residues 158 to 179 and 192 to 243; these read QDYN…ADND and TSSE…HDRQ. The span at 192 to 217 shows a compositional bias: acidic residues; sequence TSSEDIIVIDDDDDDDDQDYGDDDHA. Positions 218-229 are enriched in basic and acidic residues; the sequence is DVEKERWRGVKT.

The protein resides in the nucleus. This chain is B3 domain-containing protein At5g60142, found in Arabidopsis thaliana (Mouse-ear cress).